Consider the following 114-residue polypeptide: Small ribosomal subunit protein uS13m (114 aa).

The segment at 92 to 114 (DGLPLRGQRSHTNARTSRKRIRK) is disordered.

The protein belongs to the universal ribosomal protein uS13 family. In terms of assembly, part of the small ribosomal subunit.

It is found in the mitochondrion. In terms of biological role, located at the top of the head of the small subunit, it contacts several helices of the 18S rRNA. The polypeptide is Small ribosomal subunit protein uS13m (RPS13) (Oenothera berteroana (Bertero's evening primrose)).